The primary structure comprises 634 residues: 1,4-alpha-glucan branching enzyme GlgB (634 aa).

The active-site Nucleophile is Asp305. Glu357 acts as the Proton donor in catalysis.

It belongs to the glycosyl hydrolase 13 family. GlgB subfamily. Monomer.

It catalyses the reaction Transfers a segment of a (1-&gt;4)-alpha-D-glucan chain to a primary hydroxy group in a similar glucan chain.. It functions in the pathway glycan biosynthesis; glycogen biosynthesis. Catalyzes the formation of the alpha-1,6-glucosidic linkages in glycogen by scission of a 1,4-alpha-linked oligosaccharide from growing alpha-1,4-glucan chains and the subsequent attachment of the oligosaccharide to the alpha-1,6 position. The polypeptide is 1,4-alpha-glucan branching enzyme GlgB (Lactiplantibacillus plantarum (strain ATCC BAA-793 / NCIMB 8826 / WCFS1) (Lactobacillus plantarum)).